A 294-amino-acid polypeptide reads, in one-letter code: Glyceraldehyde-3-phosphate dehydrogenase (294 aa).

NAD(+) is bound by residues aspartate 19, arginine 63, and threonine 105. Residues 134–136 (SCT) and threonine 165 contribute to the D-glyceraldehyde 3-phosphate site. The active-site Nucleophile is cysteine 135. Residues 169–188 (KTVDGPSHKDWRGGRGASQN) are disordered. Residues 194 to 195 (TG) and arginine 217 contribute to the D-glyceraldehyde 3-phosphate site.

This sequence belongs to the glyceraldehyde-3-phosphate dehydrogenase family. Homotetramer.

The protein localises to the cytoplasm. The catalysed reaction is D-glyceraldehyde 3-phosphate + phosphate + NAD(+) = (2R)-3-phospho-glyceroyl phosphate + NADH + H(+). Its pathway is carbohydrate degradation; glycolysis; pyruvate from D-glyceraldehyde 3-phosphate: step 1/5. Catalyzes the oxidative phosphorylation of glyceraldehyde 3-phosphate (G3P) to 1,3-bisphosphoglycerate (BPG) using the cofactor NAD. The first reaction step involves the formation of a hemiacetal intermediate between G3P and a cysteine residue, and this hemiacetal intermediate is then oxidized to a thioester, with concomitant reduction of NAD to NADH. The reduced NADH is then exchanged with the second NAD, and the thioester is attacked by a nucleophilic inorganic phosphate to produce BPG. This chain is Glyceraldehyde-3-phosphate dehydrogenase (gap), found in Citrobacter freundii.